The primary structure comprises 336 residues: Dihydroorotate dehydrogenase (quinone) (336 aa).

Residues 62–66 and threonine 86 each bind FMN; that span reads AGLDK. Lysine 66 provides a ligand contact to substrate. 111 to 115 serves as a coordination point for substrate; that stretch reads NRFGF. FMN-binding residues include asparagine 139 and asparagine 172. Asparagine 172 is a substrate binding site. Serine 175 serves as the catalytic Nucleophile. Asparagine 177 is a binding site for substrate. 2 residues coordinate FMN: lysine 217 and threonine 245. A substrate-binding site is contributed by 246–247; the sequence is NT. FMN is bound by residues glycine 268, glycine 297, and 318–319; that span reads YS.

This sequence belongs to the dihydroorotate dehydrogenase family. Type 2 subfamily. As to quaternary structure, monomer. It depends on FMN as a cofactor.

It localises to the cell membrane. It carries out the reaction (S)-dihydroorotate + a quinone = orotate + a quinol. The protein operates within pyrimidine metabolism; UMP biosynthesis via de novo pathway; orotate from (S)-dihydroorotate (quinone route): step 1/1. In terms of biological role, catalyzes the conversion of dihydroorotate to orotate with quinone as electron acceptor. This chain is Dihydroorotate dehydrogenase (quinone), found in Photobacterium profundum (strain SS9).